Reading from the N-terminus, the 246-residue chain is Proteolipid protein DM gamma (246 aa).

Transmembrane regions (helical) follow at residues 19–35 (LLAT…FCGC), 71–87 (VIYG…IILL), 118–134 (VFLT…VFGF), and 206–222 (FIVA…ALLI).

It belongs to the myelin proteolipid protein family. Highly expressed in white matter in myelinating shark brain.

Its subcellular location is the membrane. The protein is Proteolipid protein DM gamma of Squalus acanthias (Spiny dogfish).